The sequence spans 245 residues: Fibroblast growth factor-binding protein 3 (245 aa).

The signal sequence occupies residues 1-28 (MSPPRPRASLSPLTLLLLLGGCLLSAAG). Positions 33–52 (AAGREVTRASRPTVGSSGRF) are disordered. Cystine bridges form between cysteine 60–cysteine 81 and cysteine 91–cysteine 125. A disordered region spans residues 136 to 216 (CARKTAGSDL…PAAAGFQPNG (81 aa)). Positions 170-180 (RSRQSVRSPSS) are enriched in low complexity. Cysteine 228 and cysteine 236 are joined by a disulfide.

It belongs to the fibroblast growth factor-binding protein family. Interacts with FGF2. As to expression, in the adult, highly expressed in brain with lower levels in ovary. In the embryo, highest levels are found in the brain and spinal cord at 14 dpc and expression is almost completely restricted to the brain by 18 dpc. In the adult and postnatal brain, highly expressed in the orbitofrontal cortex where it is concentrated primarily in differentiated neurons.

The protein resides in the secreted. Functionally, heparin-binding protein which binds to FGF2, prevents binding of FGF2 to heparin and probably inhibits immobilization of FGF2 on extracellular matrix glycosaminoglycans, allowing its release and subsequent activation of FGFR signaling which leads to increased vascular permeability. In Mus musculus (Mouse), this protein is Fibroblast growth factor-binding protein 3 (Fgfbp3).